A 408-amino-acid chain; its full sequence is Zinc-regulated transporter 1 (408 aa).

3 consecutive transmembrane segments (helical) span residues 64–84 (IGAIFVILATSLIGMNLPLVL), 101–121 (LFARYFGSGVILATAFIHLLA), and 141–161 (WAPGICLISCWFILLLEVLLN). T234 and T237 each carry phosphothreonine. 5 helical membrane-spanning segments follow: residues 254–274 (FIILESSIILHSVIIGLTTAV), 279–299 (FKTLFPVIIFHQAFEGCGLGS), 315–335 (WVLGVIYSLVTPIGMAAGLGV), 351–371 (GVLDAISSGILVYAGLVELLA), and 387–407 (LIYLLACSMAGTGVMALLGKW).

The protein belongs to the ZIP transporter (TC 2.A.5) family.

Its subcellular location is the endoplasmic reticulum membrane. High-affinity zinc transport protein. Regulates intracellular zinc levels. The protein is Zinc-regulated transporter 1 (zrt1) of Schizosaccharomyces pombe (strain 972 / ATCC 24843) (Fission yeast).